The sequence spans 110 residues: uncharacterized protein (110 aa).

2 disordered regions span residues 1–41 and 65–110; these read MEWG…ERAQ and LRQL…ASES. Residues 38-68 adopt a coiled-coil conformation; that stretch reads ERAQQLLDAVEQRQRQLLDTIAACEEMLRQL.

This is an uncharacterized protein from Mus musculus (Mouse).